Consider the following 398-residue polypeptide: MIIHSLLDTDLYKFTMMQAVLHQHPAAQVDYRFKCRTPGVDLAQFIDEISREIDALCRLRLREDEVDYLRSLRFIKPDFADFLALFHLDRKYLALAASAAHPGEIELTIRGPWLHTILFEVPLLAIINEVWFRNTSEPDFEEGRSRLREKVRSLRSMPAGCKIADYGTRRRYSRQWHGELLPLLRDGLGEQFVGTSNVFFAKQYGLTPLGTMAHEYLQAFQALGPRLRDSQVAALDSWAREYRGDLGIALSDVVGLDAFLRDFDLYFCKLFDGMRHDSGDPFDWGERVIAHLEAHRVDPRTKVLVFSDGLNIDKVMRLYEHFSPRCRLAFGVGTSLTNDLGPTPLQIVIKMVRCNGQPVAKLSDSPGKSMCEDLGYLRYLRDVFGLPPMPEAGDPARQ.

His214 is subject to Phosphohistidine; by autocatalysis.

The protein belongs to the NAPRTase family. Post-translationally, transiently phosphorylated on a His residue during the reaction cycle. Phosphorylation strongly increases the affinity for substrates and increases the rate of nicotinate D-ribonucleotide production. Dephosphorylation regenerates the low-affinity form of the enzyme, leading to product release.

It carries out the reaction nicotinate + 5-phospho-alpha-D-ribose 1-diphosphate + ATP + H2O = nicotinate beta-D-ribonucleotide + ADP + phosphate + diphosphate. Its pathway is cofactor biosynthesis; NAD(+) biosynthesis; nicotinate D-ribonucleotide from nicotinate: step 1/1. In terms of biological role, catalyzes the synthesis of beta-nicotinate D-ribonucleotide from nicotinate and 5-phospho-D-ribose 1-phosphate at the expense of ATP. The protein is Nicotinate phosphoribosyltransferase of Xanthomonas campestris pv. campestris (strain 8004).